Here is a 506-residue protein sequence, read N- to C-terminus: Maturase K (506 aa).

It belongs to the intron maturase 2 family. MatK subfamily.

The protein localises to the plastid. It is found in the chloroplast. Usually encoded in the trnK tRNA gene intron. Probably assists in splicing its own and other chloroplast group II introns. This chain is Maturase K, found in Empetrum nigrum (Black crowberry).